A 318-amino-acid polypeptide reads, in one-letter code: Aspartate carbamoyltransferase catalytic subunit (318 aa).

Carbamoyl phosphate is bound by residues R55 and T56. K83 contacts L-aspartate. Carbamoyl phosphate contacts are provided by R105, H138, and Q141. Residues R171 and R225 each coordinate L-aspartate. Residues G266 and P267 each coordinate carbamoyl phosphate.

It belongs to the aspartate/ornithine carbamoyltransferase superfamily. ATCase family. Heterododecamer (2C3:3R2) of six catalytic PyrB chains organized as two trimers (C3), and six regulatory PyrI chains organized as three dimers (R2).

The catalysed reaction is carbamoyl phosphate + L-aspartate = N-carbamoyl-L-aspartate + phosphate + H(+). Its pathway is pyrimidine metabolism; UMP biosynthesis via de novo pathway; (S)-dihydroorotate from bicarbonate: step 2/3. Functionally, catalyzes the condensation of carbamoyl phosphate and aspartate to form carbamoyl aspartate and inorganic phosphate, the committed step in the de novo pyrimidine nucleotide biosynthesis pathway. The chain is Aspartate carbamoyltransferase catalytic subunit from Corynebacterium kroppenstedtii (strain DSM 44385 / JCM 11950 / CIP 105744 / CCUG 35717).